A 1081-amino-acid chain; its full sequence is Carbamoyl phosphate synthase large chain (1081 aa).

The carboxyphosphate synthetic domain stretch occupies residues 1–410 (MPKRTDIKTI…SFQKALRGLE (410 aa)). R129, R176, G182, G183, E215, L217, E222, G248, I249, H250, Q292, and E306 together coordinate ATP. The region spanning 133 to 335 (KEAMTKIGLG…IAKVAAKLAV (203 aa)) is the ATP-grasp 1 domain. Residues Q292, E306, and N308 each coordinate Mg(2+). Residues Q292, E306, and N308 each coordinate Mn(2+). Residues 411 to 558 (VGVDGLDEKS…YEAEHGECEA (148 aa)) form an oligomerization domain region. Residues 559–944 (DPTERKKIMV…ALFKSQLAAG (386 aa)) form a carbamoyl phosphate synthetic domain region. The ATP-grasp 2 domain occupies 683–878 (QKLLHDLGLR…LAKVAARCMA (196 aa)). Residues R719, R758, L760, E765, G790, V791, H792, S793, Q833, and E849 each coordinate ATP. 3 residues coordinate Mg(2+): Q833, E849, and N851. Mn(2+) contacts are provided by Q833, E849, and N851. Residues 945–1081 (SRLPEKGTVL…YDLQGLHASL (137 aa)) enclose the MGS-like domain. The tract at residues 945–1081 (SRLPEKGTVL…YDLQGLHASL (137 aa)) is allosteric domain.

This sequence belongs to the CarB family. In terms of assembly, composed of two chains; the small (or glutamine) chain promotes the hydrolysis of glutamine to ammonia, which is used by the large (or ammonia) chain to synthesize carbamoyl phosphate. Tetramer of heterodimers (alpha,beta)4. Requires Mg(2+) as cofactor. Mn(2+) is required as a cofactor.

It carries out the reaction hydrogencarbonate + L-glutamine + 2 ATP + H2O = carbamoyl phosphate + L-glutamate + 2 ADP + phosphate + 2 H(+). The catalysed reaction is hydrogencarbonate + NH4(+) + 2 ATP = carbamoyl phosphate + 2 ADP + phosphate + 2 H(+). It participates in amino-acid biosynthesis; L-arginine biosynthesis; carbamoyl phosphate from bicarbonate: step 1/1. It functions in the pathway pyrimidine metabolism; UMP biosynthesis via de novo pathway; (S)-dihydroorotate from bicarbonate: step 1/3. Functionally, large subunit of the glutamine-dependent carbamoyl phosphate synthetase (CPSase). CPSase catalyzes the formation of carbamoyl phosphate from the ammonia moiety of glutamine, carbonate, and phosphate donated by ATP, constituting the first step of 2 biosynthetic pathways, one leading to arginine and/or urea and the other to pyrimidine nucleotides. The large subunit (synthetase) binds the substrates ammonia (free or transferred from glutamine from the small subunit), hydrogencarbonate and ATP and carries out an ATP-coupled ligase reaction, activating hydrogencarbonate by forming carboxy phosphate which reacts with ammonia to form carbamoyl phosphate. The polypeptide is Carbamoyl phosphate synthase large chain (Ralstonia nicotianae (strain ATCC BAA-1114 / GMI1000) (Ralstonia solanacearum)).